A 179-amino-acid chain; its full sequence is NADH dehydrogenase [ubiquinone] 1 beta subcomplex subunit 9 (179 aa).

Ala2 carries the post-translational modification N-acetylalanine. Ser85 is subject to Phosphoserine. Residues 136-162 (EVKQLQEETPPGGPLTEALPPARKEGD) form a disordered region.

Belongs to the complex I LYR family. In terms of assembly, mammalian complex I is composed of 45 different subunits.

It localises to the mitochondrion inner membrane. In terms of biological role, accessory subunit of the mitochondrial membrane respiratory chain NADH dehydrogenase (Complex I), that is believed to be not involved in catalysis. Complex I functions in the transfer of electrons from NADH to the respiratory chain. The immediate electron acceptor for the enzyme is believed to be ubiquinone. The protein is NADH dehydrogenase [ubiquinone] 1 beta subcomplex subunit 9 (NDUFB9) of Pongo abelii (Sumatran orangutan).